A 706-amino-acid chain; its full sequence is MAKNSLKPSNPYNSEPETPQPRPKLPMIYYVVVIALLIGLQLAFFWSGSSREIPYSTFRTFITENKVESVRIAPEKIYVTLKPGVDSGLPKQEEGNDTTRKLLPGAKTPENEVTVNPVRDESLTALLETHGVRYEGSPGTTWISELIQWVLPFALLFGLYFFIFRRMGAGGPGAQFMNIGKNKAALYENLDEHTRITFKDVAGLDEAKAEVMEVVDFLKDPKKYTRLGGKLPKGVLLVGPPGTGKTLLAKAVAGEADVPFFSISGSDFVEMFVGVGAARVRDLFRQAKEKAPCIIFIDEIDAVGRSRGKGAMMGGNDERENTLNQLLVEMDGFATDKGVILMAATNRPDVLDPALLRPGRFDRQIMVDKPDLKGRMDTFRVHTKNMSLSPDVNLKALASQTPGFAGAEIANAANEAALLASRRNKESIEMKDFEDAIERVVAGLEKKNKVINPKEKRIVAYHEAGHAIVSWMMPENDPVQKISIVPRGMSALGYTMNIPLEDRYLMTKRELFARICGLLGGRIAEESVFGEISTGAQNDLEKITGIAYNMVMVYGMSDKIGNLSYYESNNPYYGAPGVEKKFGGETARLIDEEVKAIVESAADTVRTMLKEHRSKLEALARELLTKEMLQYCQIEEILGKRPGGQEEDSGEVDCSKKSAENGMVAHEPETTADAESTEKVGLSATELAELEAAAERLRQSRNVSDN.

The segment covering 1 to 17 has biased composition (polar residues); the sequence is MAKNSLKPSNPYNSEPE. The segment at 1–20 is disordered; sequence MAKNSLKPSNPYNSEPETPQ. Residues 1–24 are Cytoplasmic-facing; the sequence is MAKNSLKPSNPYNSEPETPQPRPK. The helical transmembrane segment at 25 to 45 threads the bilayer; it reads LPMIYYVVVIALLIGLQLAFF. Over 46-142 the chain is Periplasmic; the sequence is WSGSSREIPY…RYEGSPGTTW (97 aa). The interval 88 to 111 is disordered; it reads GLPKQEEGNDTTRKLLPGAKTPEN. Positions 91-100 are enriched in basic and acidic residues; sequence KQEEGNDTTR. Residues 143–163 form a helical membrane-spanning segment; that stretch reads ISELIQWVLPFALLFGLYFFI. Residues 164-706 are Cytoplasmic-facing; that stretch reads FRRMGAGGPG…LRQSRNVSDN (543 aa). Residue 239 to 246 coordinates ATP; sequence GPPGTGKT. H462 is a binding site for Zn(2+). The active site involves E463. Zn(2+) contacts are provided by H466 and D539. A disordered region spans residues 641-681; that stretch reads RPGGQEEDSGEVDCSKKSAENGMVAHEPETTADAESTEKVG.

In the central section; belongs to the AAA ATPase family. The protein in the C-terminal section; belongs to the peptidase M41 family. In terms of assembly, homohexamer. Zn(2+) serves as cofactor.

It localises to the cell inner membrane. Functionally, acts as a processive, ATP-dependent zinc metallopeptidase for both cytoplasmic and membrane proteins. Plays a role in the quality control of integral membrane proteins. The protein is ATP-dependent zinc metalloprotease FtsH of Chlorobium luteolum (strain DSM 273 / BCRC 81028 / 2530) (Pelodictyon luteolum).